The chain runs to 530 residues: Pre-mRNA-splicing factor PRP9 (530 aa).

A Matrin-type 1 zinc finger spans residues isoleucine 280 to lysine 310. The tract at residues aspartate 367–glutamate 388 is disordered. Basic and acidic residues predominate over residues serine 368–glutamate 388. The Matrin-type 2 zinc finger occupies tyrosine 421–cysteine 452. Residues alanine 488–methionine 516 form a disordered region. Residues leucine 504–glycine 513 are compositionally biased toward acidic residues.

This sequence belongs to the SF3A3 family. In terms of assembly, belongs to the CWC complex (or CEF1-associated complex), a spliceosome sub-complex reminiscent of a late-stage spliceosome composed of the U2, U5 and U6 snRNAs and at least BUD13, BUD31, BRR2, CDC40, CEF1, CLF1, CUS1, CWC2, CWC15, CWC21, CWC22, CWC23, CWC24, CWC25, CWC27, ECM2, HSH155, IST3, ISY1, LEA1, MSL1, NTC20, PRP8, PRP9, PRP11, PRP19, PRP21, PRP22, PRP45, PRP46, SLU7, SMB1, SMD1, SMD2, SMD3, SMX2, SMX3, SNT309, SNU114, SPP2, SYF1, SYF2, RSE1 and YJU2.

The protein resides in the nucleus. Its function is as follows. mRNA splicing factors, PRP9, PRP11, and PRP21, are necessary for binding of the U2 snRNP to the pre-mRNA in an early step of spliceosome assembly. The chain is Pre-mRNA-splicing factor PRP9 (PRP9) from Saccharomyces cerevisiae (strain ATCC 204508 / S288c) (Baker's yeast).